The sequence spans 268 residues: Undecaprenyl-diphosphatase (268 aa).

Helical transmembrane passes span 47–67 (FTIL…FAKL), 83–103 (FVIG…LAGG), 109–129 (LFNP…LLWV), 144–164 (FPLP…IPGV), 184–204 (AAEF…VYDL), 217–237 (LIVA…VKSF), and 246–266 (FTLF…ALAL).

It belongs to the UppP family.

The protein localises to the cell inner membrane. It catalyses the reaction di-trans,octa-cis-undecaprenyl diphosphate + H2O = di-trans,octa-cis-undecaprenyl phosphate + phosphate + H(+). Catalyzes the dephosphorylation of undecaprenyl diphosphate (UPP). Confers resistance to bacitracin. This chain is Undecaprenyl-diphosphatase, found in Rhodopseudomonas palustris (strain BisB18).